A 130-amino-acid chain; its full sequence is MARKRGGSSKKQKKVSFDYGVVHIKSTFNNTIITLTDKDGNTLTWASGGTVGFEGTRKGTPYAAQLAADKVAREALRMGIKKVDVLVKGPGPGREPAIRTLQGAGLEINQIKDVTPIPFNGCRPKKRRRV.

Belongs to the universal ribosomal protein uS11 family. In terms of assembly, part of the 30S ribosomal subunit. Interacts with proteins S7 and S18. Binds to IF-3.

Its function is as follows. Located on the platform of the 30S subunit, it bridges several disparate RNA helices of the 16S rRNA. Forms part of the Shine-Dalgarno cleft in the 70S ribosome. The sequence is that of Small ribosomal subunit protein uS11 from Thermotoga maritima (strain ATCC 43589 / DSM 3109 / JCM 10099 / NBRC 100826 / MSB8).